Reading from the N-terminus, the 330-residue chain is MKHFWKILSVISQSTLSVILIVELVIGIIGNGFMVLVHCMDWVKKKKMSLVNQILTALSISRIFQLCLLFISLVINFSYTDLTTSSRMIQVMYNAWILANHFSIWIATCLTVLYFLKIANFSNSFFLYLKWRVEKVVSVTLLVSLLLLILNILLTNLETDMWTNEYQRNISCSFSSHYYAKCHRQVLRLHIIFLSVPVVLSLSTFLLLIFSLWTHHKRMQQHVQGGRDARTTAHFKALQTVIAFFLLYSIFILSVLIQIWKYELLKKNLFVVFCEVVYIAFPTFHSYILIVGDMKLRQACLPLCIIAAEIQTTLCRNFRSLKYFRLCCIF.

At 1–16 the chain is on the extracellular side; sequence MKHFWKILSVISQSTL. Residues 17–37 traverse the membrane as a helical segment; the sequence is SVILIVELVIGIIGNGFMVLV. Topologically, residues 38–53 are cytoplasmic; it reads HCMDWVKKKKMSLVNQ. A helical membrane pass occupies residues 54–74; it reads ILTALSISRIFQLCLLFISLV. Residues 75-95 are Extracellular-facing; sequence INFSYTDLTTSSRMIQVMYNA. N-linked (GlcNAc...) asparagine glycosylation is present at N76. The chain crosses the membrane as a helical span at residues 96-116; the sequence is WILANHFSIWIATCLTVLYFL. Residues 117–135 are Cytoplasmic-facing; the sequence is KIANFSNSFFLYLKWRVEK. The chain crosses the membrane as a helical span at residues 136 to 156; that stretch reads VVSVTLLVSLLLLILNILLTN. Residues 157–190 lie on the Extracellular side of the membrane; it reads LETDMWTNEYQRNISCSFSSHYYAKCHRQVLRLH. N169 carries N-linked (GlcNAc...) asparagine glycosylation. The helical transmembrane segment at 191-211 threads the bilayer; it reads IIFLSVPVVLSLSTFLLLIFS. The Cytoplasmic segment spans residues 212–239; sequence LWTHHKRMQQHVQGGRDARTTAHFKALQ. The helical transmembrane segment at 240–260 threads the bilayer; it reads TVIAFFLLYSIFILSVLIQIW. Residues 261–269 lie on the Extracellular side of the membrane; sequence KYELLKKNL. A helical membrane pass occupies residues 270–290; it reads FVVFCEVVYIAFPTFHSYILI. The Cytoplasmic segment spans residues 291 to 330; the sequence is VGDMKLRQACLPLCIIAAEIQTTLCRNFRSLKYFRLCCIF.

The protein belongs to the G-protein coupled receptor T2R family.

It is found in the membrane. Putative taste receptor which may play a role in the perception of bitterness. The polypeptide is Taste receptor type 2 member 117 (Mus musculus (Mouse)).